Reading from the N-terminus, the 51-residue chain is ATP synthase subunit epsilon-like protein, mitochondrial (51 aa).

Position 21 is an N6-acetyllysine (lysine 21).

This sequence belongs to the eukaryotic ATPase epsilon family. F-type ATPases have 2 components, CF(1) - the catalytic core - and CF(0) - the membrane proton channel. CF(1) has five subunits: alpha(3), beta(3), gamma(1), delta(1), epsilon(1). CF(0) seems to have nine subunits: a, b, c, d, e, f, g, F6 and 8 (or A6L).

The protein localises to the mitochondrion inner membrane. In terms of biological role, mitochondrial membrane ATP synthase (F(1)F(0) ATP synthase or Complex V) produces ATP from ADP in the presence of a proton gradient across the membrane which is generated by electron transport complexes of the respiratory chain. F-type ATPases consist of two structural domains, F(1) - containing the extramembraneous catalytic core, and F(0) - containing the membrane proton channel, linked together by a central stalk and a peripheral stalk. During catalysis, ATP synthesis in the catalytic domain of F(1) is coupled via a rotary mechanism of the central stalk subunits to proton translocation. Part of the complex F(1) domain and of the central stalk which is part of the complex rotary element. Rotation of the central stalk against the surrounding alpha(3)beta(3) subunits leads to hydrolysis of ATP in three separate catalytic sites on the beta subunits. The chain is ATP synthase subunit epsilon-like protein, mitochondrial from Homo sapiens (Human).